A 54-amino-acid polypeptide reads, in one-letter code: Ovomucoid (54 aa).

One can recognise a Kazal-like domain in the interval 4–54 (VDCSDYPKPVCPLDYMPLCGSDSKTYSNKCNFCNAVVESSGTLTLRHFGKC). 3 disulfide bridges follow: cysteine 6/cysteine 36, cysteine 14/cysteine 33, and cysteine 22/cysteine 54.

In terms of processing, this is the only ovomucoid third domain known to be not glycosylated.

It localises to the secreted. In Struthio camelus (Common ostrich), this protein is Ovomucoid.